A 259-amino-acid chain; its full sequence is Phosphatidylserine decarboxylase proenzyme (259 aa).

Residues Asp86, His142, and Ser226 each act as charge relay system; for autoendoproteolytic cleavage activity in the active site. The active-site Schiff-base intermediate with substrate; via pyruvic acid; for decarboxylase activity is the Ser226. A Pyruvic acid (Ser); by autocatalysis modification is found at Ser226.

It belongs to the phosphatidylserine decarboxylase family. PSD-B subfamily. Prokaryotic type I sub-subfamily. Heterodimer of a large membrane-associated beta subunit and a small pyruvoyl-containing alpha subunit. Requires pyruvate as cofactor. Is synthesized initially as an inactive proenzyme. Formation of the active enzyme involves a self-maturation process in which the active site pyruvoyl group is generated from an internal serine residue via an autocatalytic post-translational modification. Two non-identical subunits are generated from the proenzyme in this reaction, and the pyruvate is formed at the N-terminus of the alpha chain, which is derived from the carboxyl end of the proenzyme. The autoendoproteolytic cleavage occurs by a canonical serine protease mechanism, in which the side chain hydroxyl group of the serine supplies its oxygen atom to form the C-terminus of the beta chain, while the remainder of the serine residue undergoes an oxidative deamination to produce ammonia and the pyruvoyl prosthetic group on the alpha chain. During this reaction, the Ser that is part of the protease active site of the proenzyme becomes the pyruvoyl prosthetic group, which constitutes an essential element of the active site of the mature decarboxylase.

It localises to the cell membrane. The catalysed reaction is a 1,2-diacyl-sn-glycero-3-phospho-L-serine + H(+) = a 1,2-diacyl-sn-glycero-3-phosphoethanolamine + CO2. It functions in the pathway phospholipid metabolism; phosphatidylethanolamine biosynthesis; phosphatidylethanolamine from CDP-diacylglycerol: step 2/2. Its function is as follows. Catalyzes the formation of phosphatidylethanolamine (PtdEtn) from phosphatidylserine (PtdSer). This chain is Phosphatidylserine decarboxylase proenzyme, found in Geobacillus sp. (strain WCH70).